Reading from the N-terminus, the 294-residue chain is Endolytic peptidoglycan transglycosylase RlpA (294 aa).

Residues 1-23 (MKQKIFQILTALCCIFYVMSAQA) form the signal peptide. The region spanning 216 to 291 (EKYTTVYKIR…NYSKPLIVYT (76 aa)) is the SPOR domain.

Belongs to the RlpA family.

Its function is as follows. Lytic transglycosylase with a strong preference for naked glycan strands that lack stem peptides. The chain is Endolytic peptidoglycan transglycosylase RlpA from Pasteurella multocida (strain Pm70).